Reading from the N-terminus, the 76-residue chain is Conotoxin Cal5a L1 (76 aa).

Positions 1 to 22 (MRFYIGLMAALMLTSILRTDSA) are cleaved as a signal peptide. Positions 23-42 (SVDQTGAEGGLALIERVIRQ) are excised as a propeptide. Pro50 carries the 4-hydroxyproline modification. At Pro58 the chain carries 4-hydroxyproline; in form cal5a, and form cal5b. Residue Pro62 is modified to 4-hydroxyproline; in form cal5a, form cal5b, and form cal5c. At Pro64 the chain carries 4-hydroxyproline; in form cal5a, form cal5b, form cal5c, and form cal5d.

Post-translationally, contains 2 disulfide bonds that can be either 'C1-C3, C2-C4' or 'C1-C4, C2-C3', since these disulfide connectivities have been observed for conotoxins with cysteine framework V (for examples, see AC P0DQQ7 and AC P81755). In terms of processing, five different peptides have been described after total venom examination by HPLC-MS. Cal5a is the longest. Cal5b-Cal5e are identical in length but are differentially hydroxylated. It is possible that hydroxylation and proteolysis at position 53 are incomplete in some of these peptides. Expressed by the venom duct.

The protein localises to the secreted. Probable neurotoxin with unknown target. Possibly targets ion channels. This chain is Conotoxin Cal5a L1, found in Californiconus californicus (California cone).